A 101-amino-acid polypeptide reads, in one-letter code: Phosphoprotein OPG062 (101 aa).

Residues 50-73 (KPSSPTCERRPSSPSRCERMNNPG) form a disordered region. Residues 56–68 (CERRPSSPSRCER) are compositionally biased toward basic and acidic residues.

Belongs to the orthopoxvirus OPG062 family. As to quaternary structure, self-associates to form high molecular-weight forms. Interacts with protein OPG157. Interacts with host RICTOR and RPTOR; these interactions disrupt the mTORC1 and mTORC2 crosstalk.

Its subcellular location is the virion. Its function is as follows. Plays an essential role in virion assembly and morphogenesis. Also plays a role in the inhibition of host immune response by dysregulating mTOR. Sequesters host RICTOR and RPTOR, thereby disrupting mTORC1 and mTORC2 crosstalk. In turn, blocks the host antiviral response in part through mTOR-dependent degradation of cGAS, the primary poxvirus sensor. The sequence is that of Phosphoprotein OPG062 (OPG062) from Monkeypox virus.